A 145-amino-acid chain; its full sequence is 3-hydroxyacyl-[acyl-carrier-protein] dehydratase FabZ (145 aa).

Histidine 48 is an active-site residue.

Belongs to the thioester dehydratase family. FabZ subfamily.

Its subcellular location is the cytoplasm. It catalyses the reaction a (3R)-hydroxyacyl-[ACP] = a (2E)-enoyl-[ACP] + H2O. In terms of biological role, involved in unsaturated fatty acids biosynthesis. Catalyzes the dehydration of short chain beta-hydroxyacyl-ACPs and long chain saturated and unsaturated beta-hydroxyacyl-ACPs. This Saccharophagus degradans (strain 2-40 / ATCC 43961 / DSM 17024) protein is 3-hydroxyacyl-[acyl-carrier-protein] dehydratase FabZ.